Here is a 161-residue protein sequence, read N- to C-terminus: Phosphopantetheine adenylyltransferase (161 aa).

Residue Ser11 coordinates substrate. ATP is bound by residues 11–12 (SF) and His19. 3 residues coordinate substrate: Lys43, Leu75, and Arg89. Residues 90 to 92 (GLR), Glu100, and 125 to 131 (YSFISSS) contribute to the ATP site.

Belongs to the bacterial CoaD family. Homohexamer. Mg(2+) serves as cofactor.

The protein localises to the cytoplasm. The enzyme catalyses (R)-4'-phosphopantetheine + ATP + H(+) = 3'-dephospho-CoA + diphosphate. The protein operates within cofactor biosynthesis; coenzyme A biosynthesis; CoA from (R)-pantothenate: step 4/5. Its function is as follows. Reversibly transfers an adenylyl group from ATP to 4'-phosphopantetheine, yielding dephospho-CoA (dPCoA) and pyrophosphate. This Staphylococcus carnosus (strain TM300) protein is Phosphopantetheine adenylyltransferase.